A 76-amino-acid polypeptide reads, in one-letter code: Sec-independent protein translocase protein TatA (76 aa).

A helical transmembrane segment spans residues 1–21 (MGGISIWQLLIIVAIIVLLFG). Residues 43-76 (MADDKSQPQDASFEKVEAKEAASTEQKAKEKEQA) form a disordered region.

The protein belongs to the TatA/E family. The Tat system comprises two distinct complexes: a TatABC complex, containing multiple copies of TatA, TatB and TatC subunits, and a separate TatA complex, containing only TatA subunits. Substrates initially bind to the TatABC complex, which probably triggers association of the separate TatA complex to form the active translocon.

The protein localises to the cell inner membrane. In terms of biological role, part of the twin-arginine translocation (Tat) system that transports large folded proteins containing a characteristic twin-arginine motif in their signal peptide across membranes. TatA could form the protein-conducting channel of the Tat system. The polypeptide is Sec-independent protein translocase protein TatA (Actinobacillus pleuropneumoniae serotype 5b (strain L20)).